Reading from the N-terminus, the 322-residue chain is tRNA U34 carboxymethyltransferase (322 aa).

Carboxy-S-adenosyl-L-methionine-binding positions include K91, W105, K110, G129, 179–180 (LE), M195, Y199, and R314.

The protein belongs to the class I-like SAM-binding methyltransferase superfamily. CmoB family. In terms of assembly, homotetramer.

The catalysed reaction is carboxy-S-adenosyl-L-methionine + 5-hydroxyuridine(34) in tRNA = 5-carboxymethoxyuridine(34) in tRNA + S-adenosyl-L-homocysteine + H(+). Functionally, catalyzes carboxymethyl transfer from carboxy-S-adenosyl-L-methionine (Cx-SAM) to 5-hydroxyuridine (ho5U) to form 5-carboxymethoxyuridine (cmo5U) at position 34 in tRNAs. The protein is tRNA U34 carboxymethyltransferase of Pseudomonas paraeruginosa (strain DSM 24068 / PA7) (Pseudomonas aeruginosa (strain PA7)).